Consider the following 315-residue polypeptide: DDRGK domain-containing protein 1 (315 aa).

Residues 1 to 28 (MVGPWVYLVAAVLLIGLILFLTRSRGRA) traverse the membrane as a helical segment. A mediates interaction with CDK5RAP3 region spans residues 1-115 (MVGPWVYLVA…IEKPAEVHPT (115 aa)). The Cytoplasmic portion of the chain corresponds to 29–315 (AAADGEPLHN…GQDLPAQASA (287 aa)). A disordered region spans residues 30–184 (AADGEPLHNE…ERKAQEEQAR (155 aa)). A compositionally biased stretch (basic and acidic residues) spans 34 to 43 (EPLHNEEERA). Position 73 is a phosphoserine (Ser-73). Positions 119–217 (GAKKLRKLEE…MTEEQSHSFL (99 aa)) are mediates interaction with TRIP4. A compositionally biased stretch (basic and acidic residues) spans 125-184 (KLEEKQARKAQREAEEAEREERKRLESQREAEWKKEEERLRLKEEQKEEEERKAQEEQAR). Positions 196-210 (AFVVEEEGVSETMTE) match the UFM1-interacting motif (UFIM) motif. The mediates interaction with UFL1 stretch occupies residues 217-315 (LTEFINYIKK…GQDLPAQASA (99 aa)). Positions 230–274 (VLLEDLAFQMGLRTQDAINRIQDLLTEGTLTGVIDDRGKFIYITP) constitute a PCI domain. Lys-268 is covalently cross-linked (Glycyl lysine isopeptide (Lys-Gly) (interchain with G-Cter in UFM1)).

This sequence belongs to the DDRGK1 family. As to quaternary structure, component of the UFM1 ribosome E3 ligase (UREL) complex, composed of UFL1, DDRGK1 and CDK5RAP3. Interacts with (unphosphorylated) ERN1/IRE1-alpha; interaction is dependent on UFM1 and takes place in response to endoplasmic reticulum stress, regulating ERN1/IRE1-alpha stability. Interacts with NFKBIA. Interacts with SOX9. Post-translationally, ufmylated; conjugated to ubiquitin-like protein UFM1, probably at Lys-268 by UFL1. The relevance of ufmylation is however unclear: as DDRGK1 acts as a substrate adapter for ufmylation, it is uncertain whether ufmylation is a collateral effect of the ufmylation process or whether it is required to regulate its activity. In terms of processing, ubiquitinated. Ubiquitination probably triggers proteasomal degradation and is negatively regulated by UFL1, the enzyme involved in the ufmylation of DDRGK1. In terms of tissue distribution, ubiquitously expressed. Higher expression in pancreatic islets, pancreatic acini and testis (at protein level). Highly expressed in the intestinal exocrine cells.

It localises to the endoplasmic reticulum membrane. In terms of biological role, component of the UFM1 ribosome E3 ligase (UREL) complex, a multiprotein complex that catalyzes ufmylation of endoplasmic reticulum-docked proteins. The UREL complex plays a key role in ribosome recycling by mediating mono-ufmylation of the RPL26/uL24 subunit of the 60S ribosome following ribosome dissociation: ufmylation weakens the junction between post-termination 60S subunits and SEC61 translocons, promoting release and recycling of the large ribosomal subunit from the endoplasmic reticulum membrane. Ufmylation of RPL26/uL24 and subsequent 60S ribosome recycling either take place after normal termination of translation or after ribosome stalling during cotranslational translocation at the endoplasmic reticulum. Within the UREL complex, DDRGK1 tethers the complex to the endoplasmic reticulum membrane to restrict its activity to endoplasmic reticulum-docked ribosomes and acts as an ufmylation 'reader': following RPL26/uL24 ufmylation, DDRGK1 specifically binds to ufmylated RPL26/uL24 via its UFIM motif, resulting in stable association between the 60S ribosome and the UREL complex, followed by dissociation of the 60S ribosome subunit from the endoplasmic reticulum membrane. The UREL complex is also involved in reticulophagy in response to endoplasmic reticulum stress by promoting ufmylation of proteins such as CYB5R3 and RPN1, thereby promoting lysosomal degradation of ufmylated proteins. Ufmylation-dependent reticulophagy inhibits the unfolded protein response (UPR) by regulating ERN1/IRE1-alpha stability. Acts as a regulator of immunity by promoting differentiation of B-cells into plasma cells: acts by promoting expansion of the endoplasmic reticulum and regulating the unfolded protein response (UPR). May also be required for TRIP4 ufmylation. May play a role in NF-kappa-B-mediated transcription through regulation of the phosphorylation and the degradation of NFKBIA, the inhibitor of NF-kappa-B. Plays a role in cartilage development through SOX9, inhibiting the ubiquitin-mediated proteasomal degradation of this transcriptional regulator. Required for stabilization and ufmylation of ATG9A. The chain is DDRGK domain-containing protein 1 from Mus musculus (Mouse).